A 408-amino-acid chain; its full sequence is Aurora kinase A-B (408 aa).

The segment covering 1 to 10 has biased composition (basic and acidic residues); it reads MERAVKENHK. The tract at residues 1–128 is disordered; sequence MERAVKENHK…QGKTLAVPKE (128 aa). Polar residues predominate over residues 85-110; that stretch reads GHQTSKPQGPNENRNPQQTSHSSTPN. A Protein kinase domain is found at 140–390; that stretch reads FEIGRPLGKG…LKGVLEHPWI (251 aa). ATP-binding positions include K150, K169, and 217–220; that span reads LDYA. Residue D263 is the Proton acceptor of the active site. Residue D281 coordinates ATP. The interval 287–300 is activation segment; the sequence is HAPSSRRTTLCGTL.

Belongs to the protein kinase superfamily. Ser/Thr protein kinase family. Aurora subfamily. As to quaternary structure, interacts with kif2c and kif11. Post-translationally, phosphorylated. Autophosphorylated on a serine residue.

The protein localises to the cytoplasm. The protein resides in the cytoskeleton. It is found in the spindle pole. Its subcellular location is the microtubule organizing center. It localises to the centrosome. The enzyme catalyses L-seryl-[protein] + ATP = O-phospho-L-seryl-[protein] + ADP + H(+). It catalyses the reaction L-threonyl-[protein] + ATP = O-phospho-L-threonyl-[protein] + ADP + H(+). In terms of biological role, mitotic serine/threonine kinases that contributes to the regulation of cell cycle progression. Associates with the centrosome and the spindle microtubules during mitosis and plays a critical role in various mitotic events including the establishment of mitotic spindle, centrosome duplication, centrosome separation as well as maturation, chromosomal alignment, spindle assembly checkpoint, and cytokinesis. Phosphorylates numerous target proteins. Important for microtubule formation and/or stabilization. The polypeptide is Aurora kinase A-B (aurka-b) (Xenopus laevis (African clawed frog)).